The sequence spans 774 residues: Glycophorin-binding protein 130 (774 aa).

A PEXEL motif motif is present at residues 84–88 (RILAE). Disordered stretches follow at residues 97–243 (EKTT…AADP), 256–291 (LTNT…EYAS), 310–334 (DPND…PEGQ), 358–383 (NTDP…DPEG), 410–434 (DPND…PEGQ), 458–481 (NTDP…SDPE), 509–533 (DPND…PEGQ), 609–632 (DPND…DPEG), 661–682 (NDEV…DPEG), and 709–734 (DPND…EGQI). Composition is skewed to basic and acidic residues over residues 117–140 (TKKD…SEKQ) and 174–198 (KKEE…EPKA). Residues 201 to 228 (VSQKPSTSTRSNNEVKIRAASNQETLTS) show a composition bias toward polar residues. GBP repeat units lie at residues 226–275 (LTSA…NKED), 276–325 (LTSA…NKED), 326–375 (LTSA…NKED), 376–425 (LTSA…NKED), 426–474 (LTSA…DNKE), 475–524 (LTSS…NKED), 525–574 (LTSA…NKEE), 575–624 (LTSS…NKED), 625–674 (LTSA…NKED), 675–724 (LTSA…NKED), and 725–774 (LTSA…NNEA). Composition is skewed to basic and acidic residues over residues 264–276 (EVER…KEDL), 314–326 (DVER…KEDL), 364–376 (EVER…KEDL), 414–426 (EVER…KEDL), 464–476 (EVER…KELT), 513–525 (EVER…KEDL), 613–625 (EVER…KEDL), 663–675 (EVER…KEDL), and 713–725 (DVER…KEDL).

Interacts with host glycophorin.

Its subcellular location is the secreted. It localises to the cell surface. It is found in the host cytoplasm. Functionally, involved in merozoite invasion of host erythrocytes. This chain is Glycophorin-binding protein 130, found in Plasmodium falciparum (isolate FCR-3 / Gambia).